The following is a 303-amino-acid chain: Probable WRKY transcription factor 30 (303 aa).

The tract at residues 65 to 92 is disordered; the sequence is DQVSQGGGSPKSDDSDQEPLVIKSSKKS. The segment at residues 107 to 175 is a DNA-binding region (WRKY); it reads GVDRTLDDGF…YRGIHSCSQA (69 aa). Low complexity predominate over residues 266 to 278; that stretch reads SGSASHSASNSPS. The disordered stretch occupies residues 266–291; sequence SGSASHSASNSPSTVPLESPFESYDP.

This sequence belongs to the WRKY group III family. In terms of assembly, interacts with WRKY53, WRKY54 and WRKY70.

The protein resides in the nucleus. Transcription factor. Interacts specifically with the W box (5'-(T)TGAC[CT]-3'), a frequently occurring elicitor-responsive cis-acting element. This chain is Probable WRKY transcription factor 30, found in Arabidopsis thaliana (Mouse-ear cress).